The sequence spans 325 residues: Aldo-keto reductase family 1 member A1 (325 aa).

Ala2 bears the N-acetylalanine mark. Ser4 is subject to Phosphoserine. Residues Gly11 to Gly20, Thr21, and Trp22 each bind NADP(+). The residue at position 38 (Ser38) is a Phosphoserine. Asp45 contributes to the NADP(+) binding site. Catalysis depends on Tyr50, which acts as the Proton donor. At Lys127 the chain carries N6-acetyllysine; alternate. Position 127 is an N6-succinyllysine; alternate (Lys127). The residue at position 145 (Lys145) is an N6-succinyllysine. NADP(+)-binding residues include Ser162, Asn163, Ser211, Leu213, Ser215, Ser216, Lys263, Ser264, Ile265, Thr266, Arg269, Gln272, and Asn273. Phosphoserine is present on Ser211.

Belongs to the aldo/keto reductase family. In terms of assembly, monomer. As to expression, widely expressed. Highly expressed in kidney, salivary gland and liver. Detected in trachea, stomach, brain, lung, prostate, placenta, mammary gland, small intestine and lung.

It localises to the cytoplasm. The protein localises to the cytosol. Its subcellular location is the apical cell membrane. The catalysed reaction is a primary alcohol + NADP(+) = an aldehyde + NADPH + H(+). The enzyme catalyses allyl alcohol + NADP(+) = acrolein + NADPH + H(+). It carries out the reaction glycerol + NADP(+) = D-glyceraldehyde + NADPH + H(+). It catalyses the reaction glycerol + NADP(+) = L-glyceraldehyde + NADPH + H(+). The catalysed reaction is hydroxyacetone + NADP(+) = methylglyoxal + NADPH + H(+). The enzyme catalyses a 4-hydroxynonen-1-ol + NADP(+) = a 4-hydroxynonenal + NADPH + H(+). It carries out the reaction 3-deoxyfructose + NADP(+) = 3-deoxyglucosone + NADPH + H(+). It catalyses the reaction L-gulonate + NADP(+) = aldehydo-D-glucuronate + NADPH + H(+). The catalysed reaction is L-gulono-1,4-lactone + NADP(+) = D-glucurono-3,6-lactone + NADPH + H(+). The enzyme catalyses pyridine 3-methanol + NADP(+) = pyridine-3-carbaldehyde + NADPH + H(+). It carries out the reaction S-nitroso-CoA + NADPH + H(+) = sulfinamide-CoA + NADP(+). It catalyses the reaction S-nitrosoglutathione + NADPH + H(+) = S-(hydroxysulfenamide)glutathione + NADP(+). Functionally, catalyzes the NADPH-dependent reduction of a wide variety of carbonyl-containing compounds to their corresponding alcohols. Displays enzymatic activity towards endogenous metabolites such as aromatic and aliphatic aldehydes, ketones, monosaccharides and bile acids, with a preference for negatively charged substrates, such as glucuronate and succinic semialdehyde. Functions as a detoxifiying enzyme by reducing a range of toxic aldehydes. Reduces methylglyoxal and 3-deoxyglucosone, which are present at elevated levels under hyperglycemic conditions and are cytotoxic. Involved also in the detoxification of lipid-derived aldehydes like acrolein. Plays a role in the activation of procarcinogens, such as polycyclic aromatic hydrocarbon trans-dihydrodiols, and in the metabolism of various xenobiotics and drugs, including the anthracyclines doxorubicin (DOX) and daunorubicin (DAUN). Also acts as an inhibitor of protein S-nitrosylation by mediating degradation of S-nitroso-coenzyme A (S-nitroso-CoA), a cofactor required to S-nitrosylate proteins. S-nitroso-CoA reductase activity is involved in reprogramming intermediary metabolism in renal proximal tubules, notably by inhibiting protein S-nitrosylation of isoform 2 of PKM (PKM2). Also acts as a S-nitroso-glutathione reductase by catalyzing the NADPH-dependent reduction of S-nitrosoglutathione. Displays no reductase activity towards retinoids. The protein is Aldo-keto reductase family 1 member A1 (AKR1A1) of Homo sapiens (Human).